The primary structure comprises 152 residues: Transcriptional regulator MraZ (152 aa).

2 consecutive SpoVT-AbrB domains span residues 5–52 and 81–124; these read ASAV…PLNQ and ATEC…SESE.

This sequence belongs to the MraZ family. In terms of assembly, forms oligomers.

It localises to the cytoplasm. Its subcellular location is the nucleoid. The sequence is that of Transcriptional regulator MraZ from Histophilus somni (strain 129Pt) (Haemophilus somnus).